Consider the following 220-residue polypeptide: Deoxyribose-phosphate aldolase (220 aa).

The active-site Proton donor/acceptor is D89. K151 (schiff-base intermediate with acetaldehyde) is an active-site residue. The active-site Proton donor/acceptor is K180.

The protein belongs to the DeoC/FbaB aldolase family. DeoC type 1 subfamily.

The protein resides in the cytoplasm. It catalyses the reaction 2-deoxy-D-ribose 5-phosphate = D-glyceraldehyde 3-phosphate + acetaldehyde. It functions in the pathway carbohydrate degradation; 2-deoxy-D-ribose 1-phosphate degradation; D-glyceraldehyde 3-phosphate and acetaldehyde from 2-deoxy-alpha-D-ribose 1-phosphate: step 2/2. In terms of biological role, catalyzes a reversible aldol reaction between acetaldehyde and D-glyceraldehyde 3-phosphate to generate 2-deoxy-D-ribose 5-phosphate. The chain is Deoxyribose-phosphate aldolase from Lactococcus lactis subsp. cremoris (strain SK11).